The primary structure comprises 143 residues: S-adenosylmethionine decarboxylase proenzyme (143 aa).

Ser66 (schiff-base intermediate with substrate; via pyruvic acid) is an active-site residue. The residue at position 66 (Ser66) is a Pyruvic acid (Ser); by autocatalysis. Catalysis depends on His71, which acts as the Proton acceptor; for processing activity. Cys86 (proton donor; for catalytic activity) is an active-site residue.

Belongs to the prokaryotic AdoMetDC family. Type 1 subfamily. As to quaternary structure, heterotetramer of two alpha and two beta chains arranged as a dimer of alpha/beta heterodimers. Pyruvate is required as a cofactor. In terms of processing, is synthesized initially as an inactive proenzyme. Formation of the active enzyme involves a self-maturation process in which the active site pyruvoyl group is generated from an internal serine residue via an autocatalytic post-translational modification. Two non-identical subunits are generated from the proenzyme in this reaction, and the pyruvate is formed at the N-terminus of the alpha chain, which is derived from the carboxyl end of the proenzyme. The post-translation cleavage follows an unusual pathway, termed non-hydrolytic serinolysis, in which the side chain hydroxyl group of the serine supplies its oxygen atom to form the C-terminus of the beta chain, while the remainder of the serine residue undergoes an oxidative deamination to produce ammonia and the pyruvoyl group blocking the N-terminus of the alpha chain.

The catalysed reaction is S-adenosyl-L-methionine + H(+) = S-adenosyl 3-(methylsulfanyl)propylamine + CO2. It participates in amine and polyamine biosynthesis; S-adenosylmethioninamine biosynthesis; S-adenosylmethioninamine from S-adenosyl-L-methionine: step 1/1. Its function is as follows. Catalyzes the decarboxylation of S-adenosylmethionine to S-adenosylmethioninamine (dcAdoMet), the propylamine donor required for the synthesis of the polyamines spermine and spermidine from the diamine putrescine. The sequence is that of S-adenosylmethionine decarboxylase proenzyme from Thermococcus gammatolerans (strain DSM 15229 / JCM 11827 / EJ3).